A 444-amino-acid polypeptide reads, in one-letter code: Putative F-box protein At1g64540 (444 aa).

In terms of domain architecture, F-box spans Arg-4–Glu-50.

The polypeptide is Putative F-box protein At1g64540 (Arabidopsis thaliana (Mouse-ear cress)).